The sequence spans 272 residues: Shikimate dehydrogenase (NADP(+)) (272 aa).

Residues 14 to 16 (SKS) and Thr61 contribute to the shikimate site. Lys65 functions as the Proton acceptor in the catalytic mechanism. Glu77 lines the NADP(+) pocket. Shikimate is bound by residues Asn86 and Asp102. NADP(+)-binding positions include 126-130 (GAGGA), 149-154 (NRTVSR), and Met213. Tyr215 lines the shikimate pocket. Residue Gly237 participates in NADP(+) binding.

This sequence belongs to the shikimate dehydrogenase family. As to quaternary structure, homodimer.

The enzyme catalyses shikimate + NADP(+) = 3-dehydroshikimate + NADPH + H(+). It participates in metabolic intermediate biosynthesis; chorismate biosynthesis; chorismate from D-erythrose 4-phosphate and phosphoenolpyruvate: step 4/7. Its function is as follows. Involved in the biosynthesis of the chorismate, which leads to the biosynthesis of aromatic amino acids. Catalyzes the reversible NADPH linked reduction of 3-dehydroshikimate (DHSA) to yield shikimate (SA). This chain is Shikimate dehydrogenase (NADP(+)), found in Shigella sonnei (strain Ss046).